The primary structure comprises 397 residues: Diphosphomevalonate decarboxylase (397 aa).

(R)-5-diphosphomevalonate-binding positions include 19 to 22 (YWGK), arginine 74, 153 to 158 (SGSACR), and threonine 209. Positions 378-397 (GPGPQDTKSSLIDPETGLPR) are disordered.

Belongs to the diphosphomevalonate decarboxylase family. Homodimer.

The enzyme catalyses (R)-5-diphosphomevalonate + ATP = isopentenyl diphosphate + ADP + phosphate + CO2. It participates in isoprenoid biosynthesis; isopentenyl diphosphate biosynthesis via mevalonate pathway; isopentenyl diphosphate from (R)-mevalonate: step 3/3. Its function is as follows. Diphosphomevalonate decarboxylase; part of the second module of ergosterol biosynthesis pathway that includes the middle steps of the pathway. The second module is carried out in the vacuole and involves the formation of farnesyl diphosphate, which is also an important intermediate in the biosynthesis of ubiquinone, dolichol, heme and prenylated proteins. Activity by the mevalonate kinase ERG12 first converts mevalonate into 5-phosphomevalonate. 5-phosphomevalonate is then further converted to 5-diphosphomevalonate by the phosphomevalonate kinase ERG8. The diphosphomevalonate decarboxylase MVD1/ERG19 then produces isopentenyl diphosphate. The isopentenyl-diphosphate delta-isomerase IDI1 then catalyzes the 1,3-allylic rearrangement of the homoallylic substrate isopentenyl (IPP) to its highly electrophilic allylic isomer, dimethylallyl diphosphate (DMAPP). Finally the farnesyl diphosphate synthase ERG20 catalyzes the sequential condensation of isopentenyl pyrophosphate with dimethylallyl pyrophosphate, and then with the resultant geranylpyrophosphate to the ultimate product farnesyl pyrophosphate. This chain is Diphosphomevalonate decarboxylase, found in Eremothecium gossypii (strain ATCC 10895 / CBS 109.51 / FGSC 9923 / NRRL Y-1056) (Yeast).